The sequence spans 109 residues: MANLFNWLPLLSGRQADGIKAKVEIYTWQTCPFCIRAKLLLWWKGVKFIEYKIDGDDQARQAMAARAEGRRTVPQIFVNDQGIGGCDQLYGLDSRGQLDPLLATPPNPA.

One can recognise a Glutaredoxin domain in the interval 11-109; sequence LSGRQADGIK…PLLATPPNPA (99 aa). A disulfide bridge links Cys-31 with Cys-34.

Belongs to the glutaredoxin family.

Has a glutathione-disulfide oxidoreductase activity in the presence of NADPH and glutathione reductase. Reduces low molecular weight disulfides and proteins. The chain is Probable glutaredoxin slr1562 from Synechocystis sp. (strain ATCC 27184 / PCC 6803 / Kazusa).